A 551-amino-acid chain; its full sequence is MAKTVSWHIINAKILDVFNLTFETSELWIDHDKIVYRGRRSDLQAQHTFDAQGQYIVPGLIDAHMHIESSLLAPSEFSKLVVPHGITRVIADPHEIASVAGVSGIQYMLEEARQSQLHIHYMLPSSVPATPFEHAGATLHADALKPFYSVPEVNGLAEVMDFPAVFNEDEDMHQKISDSQAAGKHVDGHASGLSREQLAIYRKYGIDTDHESENAQQARDRLNAGFSVFVREGTVERDESAILPAISVANQAHFSFATDDKTANDIQHEGAIDFNVKLAIQSGMSPAMAFTIASYNAATAHRLDNVGALTDGYVADLVIIDSLDDFNIKKVMISGQWYVEPETTVLPLANQSLNFTLTVDDLKLPINDKKPAHVIEIMPHHITTTHLVEDVPSQEGLFVADKTYTKIVVAERYHNLGHGVGIIKGFQMTDGAIASTIAHDSHNIIIAGTNDEDMLLAANKLREIGGGEVVVNNGQITTLPLAIGGLMSEQSYTTVIQENNTLQAAFSKISHLNFDPFLTLSFMALPVIPSLKITDQGLFDFNTFSFINIQD.

The protein belongs to the metallo-dependent hydrolases superfamily. Adenine deaminase family. Mn(2+) is required as a cofactor.

It catalyses the reaction adenine + H2O + H(+) = hypoxanthine + NH4(+). This Leuconostoc citreum (strain KM20) protein is Adenine deaminase.